A 309-amino-acid polypeptide reads, in one-letter code: Porphobilinogen deaminase (309 aa).

An S-(dipyrrolylmethanemethyl)cysteine modification is found at Cys243.

The protein belongs to the HMBS family. In terms of assembly, monomer. Dipyrromethane is required as a cofactor.

It carries out the reaction 4 porphobilinogen + H2O = hydroxymethylbilane + 4 NH4(+). It functions in the pathway porphyrin-containing compound metabolism; protoporphyrin-IX biosynthesis; coproporphyrinogen-III from 5-aminolevulinate: step 2/4. Tetrapolymerization of the monopyrrole PBG into the hydroxymethylbilane pre-uroporphyrinogen in several discrete steps. The sequence is that of Porphobilinogen deaminase from Deinococcus geothermalis (strain DSM 11300 / CIP 105573 / AG-3a).